Here is a 199-residue protein sequence, read N- to C-terminus: LIM domain-containing protein E (199 aa).

Positions 5–65 constitute an LIM zinc-binding domain; it reads VKCGACAKTA…PVHTPKVSAT (61 aa). Residues 134–199 are disordered; sequence YAVFGADGQP…EEEQQYEEEQ (66 aa). Low complexity-rich tracts occupy residues 146–155 and 163–174; these read EQQEQQQYTE and EEQQYQEEQQQY. Residues 175–199 are compositionally biased toward acidic residues; it reads QEEEQQYQEEEQQYQEEEQQYEEEQ.

May interact with rac1A.

The protein localises to the cytoplasm. It localises to the cell cortex. Its subcellular location is the nucleus. The protein resides in the cell projection. It is found in the lamellipodium. The protein localises to the filopodium. It localises to the cytoskeleton. Its function is as follows. Associates with the actin cytoskeleton and may regulate actin polymerization in lamellipodia, through a rac1-dependent signaling pathway. May play a role in cell motility. Involved in cytokinesis by regulating the microtubule system and linking it to the cortical actin network. The chain is LIM domain-containing protein E (limE) from Dictyostelium discoideum (Social amoeba).